Reading from the N-terminus, the 415-residue chain is Imidazolonepropionase (415 aa).

Histidine 75 and histidine 77 together coordinate Fe(3+). Zn(2+)-binding residues include histidine 75 and histidine 77. 4-imidazolone-5-propanoate-binding residues include arginine 84, tyrosine 147, and histidine 180. Tyrosine 147 is a binding site for N-formimidoyl-L-glutamate. Residue histidine 245 coordinates Fe(3+). Histidine 245 contacts Zn(2+). 4-imidazolone-5-propanoate is bound at residue glutamine 248. Residue aspartate 320 participates in Fe(3+) binding. A Zn(2+)-binding site is contributed by aspartate 320. Asparagine 322 and glycine 324 together coordinate N-formimidoyl-L-glutamate. Threonine 325 contacts 4-imidazolone-5-propanoate.

Belongs to the metallo-dependent hydrolases superfamily. HutI family. Zn(2+) is required as a cofactor. The cofactor is Fe(3+).

It localises to the cytoplasm. It carries out the reaction 4-imidazolone-5-propanoate + H2O = N-formimidoyl-L-glutamate. It participates in amino-acid degradation; L-histidine degradation into L-glutamate; N-formimidoyl-L-glutamate from L-histidine: step 3/3. In terms of biological role, catalyzes the hydrolytic cleavage of the carbon-nitrogen bond in imidazolone-5-propanoate to yield N-formimidoyl-L-glutamate. It is the third step in the universal histidine degradation pathway. The chain is Imidazolonepropionase from Photorhabdus laumondii subsp. laumondii (strain DSM 15139 / CIP 105565 / TT01) (Photorhabdus luminescens subsp. laumondii).